The primary structure comprises 236 residues: 27 kDa hemolymph protein (236 aa).

A signal peptide spans 1 to 17 (MMWKLIIVTILAVGVLC).

In terms of assembly, monomer. In terms of tissue distribution, hemolymph.

It localises to the secreted. This Galleria mellonella (Greater wax moth) protein is 27 kDa hemolymph protein.